We begin with the raw amino-acid sequence, 212 residues long: MDPKCSLILLSGGKGERFGANQPKQYLPFQGEPLILHALKTALHIPEITEVIVVCDVSYRHIFEGFPVKFAESGKRRQDSVFSGLQHVSNPWVLIHDGVRPFIYPDEVTELIAVAQQTGAATLVSNVPYTIKQRHPVKTLDRDALSIVHTPQCVKTEILSAGLEFASREGITLVDDTQAAELLDIPVSLVSSKHPQIKITYPEDLTIAHALL.

This sequence belongs to the IspD/TarI cytidylyltransferase family. IspD subfamily.

The enzyme catalyses 2-C-methyl-D-erythritol 4-phosphate + CTP + H(+) = 4-CDP-2-C-methyl-D-erythritol + diphosphate. Its pathway is isoprenoid biosynthesis; isopentenyl diphosphate biosynthesis via DXP pathway; isopentenyl diphosphate from 1-deoxy-D-xylulose 5-phosphate: step 2/6. In terms of biological role, catalyzes the formation of 4-diphosphocytidyl-2-C-methyl-D-erythritol from CTP and 2-C-methyl-D-erythritol 4-phosphate (MEP). The chain is 2-C-methyl-D-erythritol 4-phosphate cytidylyltransferase from Chlamydia caviae (strain ATCC VR-813 / DSM 19441 / 03DC25 / GPIC) (Chlamydophila caviae).